A 105-amino-acid chain; its full sequence is Nucleoid-associated protein lin2851 (105 aa).

The span at 1 to 16 (MRGMGNMQGMMKQMQK) shows a compositional bias: low complexity. The disordered stretch occupies residues 1–23 (MRGMGNMQGMMKQMQKMQKEMAK).

It belongs to the YbaB/EbfC family. In terms of assembly, homodimer.

The protein resides in the cytoplasm. The protein localises to the nucleoid. In terms of biological role, binds to DNA and alters its conformation. May be involved in regulation of gene expression, nucleoid organization and DNA protection. This chain is Nucleoid-associated protein lin2851, found in Listeria innocua serovar 6a (strain ATCC BAA-680 / CLIP 11262).